The chain runs to 327 residues: Methionyl-tRNA formyltransferase (327 aa).

111 to 114 (SLLP) provides a ligand contact to (6S)-5,6,7,8-tetrahydrofolate.

It belongs to the Fmt family.

The catalysed reaction is L-methionyl-tRNA(fMet) + (6R)-10-formyltetrahydrofolate = N-formyl-L-methionyl-tRNA(fMet) + (6S)-5,6,7,8-tetrahydrofolate + H(+). Functionally, attaches a formyl group to the free amino group of methionyl-tRNA(fMet). The formyl group appears to play a dual role in the initiator identity of N-formylmethionyl-tRNA by promoting its recognition by IF2 and preventing the misappropriation of this tRNA by the elongation apparatus. The sequence is that of Methionyl-tRNA formyltransferase from Synechococcus elongatus (strain ATCC 33912 / PCC 7942 / FACHB-805) (Anacystis nidulans R2).